The sequence spans 962 residues: Phenylalanine--tRNA ligase beta subunit (962 aa).

In terms of domain architecture, tRNA-binding spans threonine 85 to serine 201. The region spanning threonine 456–serine 538 is the B5 domain. Aspartate 516, aspartate 522, glutamate 525, and glutamate 526 together coordinate Mg(2+). The insert stretch occupies residues proline 621–arginine 675. An FDX-ACB domain is found at proline 870–arginine 961.

The protein belongs to the phenylalanyl-tRNA synthetase beta subunit family. Type 1 subfamily. In terms of assembly, tetramer of two alpha and two beta subunits. The cofactor is Mg(2+).

The protein resides in the cytoplasm. The enzyme catalyses tRNA(Phe) + L-phenylalanine + ATP = L-phenylalanyl-tRNA(Phe) + AMP + diphosphate + H(+). In Tropheryma whipplei (strain Twist) (Whipple's bacillus), this protein is Phenylalanine--tRNA ligase beta subunit.